The sequence spans 429 residues: Adenylosuccinate synthetase (429 aa).

GTP is bound by residues 12–18 (GDEGKGK) and 40–42 (GHT). Aspartate 13 acts as the Proton acceptor in catalysis. Positions 13 and 40 each coordinate Mg(2+). IMP is bound by residues 13–16 (DEGK), 38–41 (NAGH), threonine 128, arginine 142, glutamine 223, and arginine 302. The active-site Proton donor is histidine 41. 298-304 (TVTGRPR) serves as a coordination point for substrate. GTP contacts are provided by residues arginine 304, 330 to 332 (LLD), and 412 to 414 (SVG).

This sequence belongs to the adenylosuccinate synthetase family. Homodimer. It depends on Mg(2+) as a cofactor.

The protein localises to the cytoplasm. It catalyses the reaction IMP + L-aspartate + GTP = N(6)-(1,2-dicarboxyethyl)-AMP + GDP + phosphate + 2 H(+). It functions in the pathway purine metabolism; AMP biosynthesis via de novo pathway; AMP from IMP: step 1/2. Plays an important role in the de novo pathway of purine nucleotide biosynthesis. Catalyzes the first committed step in the biosynthesis of AMP from IMP. The chain is Adenylosuccinate synthetase from Lactobacillus delbrueckii subsp. bulgaricus (strain ATCC 11842 / DSM 20081 / BCRC 10696 / JCM 1002 / NBRC 13953 / NCIMB 11778 / NCTC 12712 / WDCM 00102 / Lb 14).